Here is a 302-residue protein sequence, read N- to C-terminus: Quinolinate synthase (302 aa).

Residues His-24 and Ser-41 each contribute to the iminosuccinate site. Cys-86 provides a ligand contact to [4Fe-4S] cluster. Residues 112–114 and Ser-129 contribute to the iminosuccinate site; that span reads YVN. Cys-173 is a binding site for [4Fe-4S] cluster. Iminosuccinate is bound by residues 199–201 and Thr-216; that span reads HPE. A [4Fe-4S] cluster-binding site is contributed by Cys-259.

It belongs to the quinolinate synthase family. Type 2 subfamily. The cofactor is [4Fe-4S] cluster.

It is found in the cytoplasm. The enzyme catalyses iminosuccinate + dihydroxyacetone phosphate = quinolinate + phosphate + 2 H2O + H(+). It functions in the pathway cofactor biosynthesis; NAD(+) biosynthesis; quinolinate from iminoaspartate: step 1/1. In terms of biological role, catalyzes the condensation of iminoaspartate with dihydroxyacetone phosphate to form quinolinate. The polypeptide is Quinolinate synthase (Thermococcus kodakarensis (strain ATCC BAA-918 / JCM 12380 / KOD1) (Pyrococcus kodakaraensis (strain KOD1))).